The sequence spans 445 residues: tRNA modification GTPase MnmE (445 aa).

(6S)-5-formyl-5,6,7,8-tetrahydrofolate contacts are provided by Arg20, Glu79, and Lys119. A TrmE-type G domain is found at 215 to 371; it reads GLKLAIIGPP…ILKNIEEIAE (157 aa). A K(+)-binding site is contributed by Asn225. Residues 225 to 230, 244 to 250, and 269 to 272 contribute to the GTP site; these read NAGKSS, SNIAGTT, and DTAG. Ser229 is a binding site for Mg(2+). K(+)-binding residues include Ser244, Ile246, and Thr249. Thr250 serves as a coordination point for Mg(2+). Lys445 contacts (6S)-5-formyl-5,6,7,8-tetrahydrofolate.

The protein belongs to the TRAFAC class TrmE-Era-EngA-EngB-Septin-like GTPase superfamily. TrmE GTPase family. As to quaternary structure, homodimer. Heterotetramer of two MnmE and two MnmG subunits. K(+) serves as cofactor.

The protein localises to the cytoplasm. Functionally, exhibits a very high intrinsic GTPase hydrolysis rate. Involved in the addition of a carboxymethylaminomethyl (cmnm) group at the wobble position (U34) of certain tRNAs, forming tRNA-cmnm(5)s(2)U34. The sequence is that of tRNA modification GTPase MnmE from Rickettsia bellii (strain RML369-C).